Consider the following 225-residue polypeptide: tRNA (guanine-N(1)-)-methyltransferase (225 aa).

Residues G112 and 132–137 contribute to the S-adenosyl-L-methionine site; that span reads IGDYVL.

It belongs to the RNA methyltransferase TrmD family. As to quaternary structure, homodimer.

Its subcellular location is the cytoplasm. It catalyses the reaction guanosine(37) in tRNA + S-adenosyl-L-methionine = N(1)-methylguanosine(37) in tRNA + S-adenosyl-L-homocysteine + H(+). In terms of biological role, specifically methylates guanosine-37 in various tRNAs. In Flavobacterium psychrophilum (strain ATCC 49511 / DSM 21280 / CIP 103535 / JIP02/86), this protein is tRNA (guanine-N(1)-)-methyltransferase.